A 388-amino-acid chain; its full sequence is Trans-enoyl reductase tenC (388 aa).

An NADP(+)-binding site is contributed by 51-54; the sequence is VDGK. 142–149 contacts substrate; sequence VGVASVGM. NADP(+) is bound by residues 219-222, tyrosine 237, and 284-285; these read SSES and LD. 304–308 is a substrate binding site; sequence SFTQF. 373 to 374 is an NADP(+) binding site; sequence IK.

It belongs to the zinc-containing alcohol dehydrogenase family. Monomer.

Its pathway is secondary metabolite biosynthesis. In terms of biological role, trans-enoyl reductase; part of the gene cluster that mediates the biosynthesis of tenellin-type 2-pyridones, iron-chelating compounds involved in iron stress tolerance, competition with the natural competitor fungus Metarhizium robertsii and insect hosts infection. TenC collaborates with the hybrid PKS-NRPS synthetase tenS to catalyze the assembly of the polyketide-amino acid backbone, since tenS lacks a designated enoylreductase (ER) domain. Upon formation of the polyketide backbone on the thiotemplate of tenS, the triketide is transferred to the NRPS module and linked to tyrosine to produce the pyrrolidine-2-dione intermediates, including pretellinin A, 11-hydropretellenin A, 12-hydropretellenin A, 13-hydropretellenin A, 14-hydropretellenin A, 12-oxopretellenin A and prototellinin D. The pathway begins with the assembly of the polyketide-amino acid backbone by the hybrid PKS-NRPS tenS with the help of the enoyl reductase tenC. These enzymes catalyze the synthesis of the pyrrolidine-2-dione intermediates pretellinin A, 11-hydropretellenin A, 12-hydropretellenin A, 13-hydropretellenin A, 14-hydropretellenin A, 12-oxopretellenin A and prototellinin D. The cytochrome P450 monooxygenase tenA then catalyzes an oxidative ring expansion of pretenellin A and 14-hydropretellenin A to form the 2-pyridone core, leading to pretenellin B and pyridovericin, respectively. The cytochrome P450 monooxygenase tenB is then required for the selective N-hydroxylation of the 2-pyridone nitrogen of yield tellinin and 15-hydroxytellenin (15-HT), respectively. The UDP-glucosyltransferase GT1 and the methyltransferase MT1, located outside the tenS gene cluster, contribute to the stepwise glycosylation and methylation of 15-HT to obtain the glycoside pyridovericin-N-O-(4-O-methyl-beta-D-glucopyranoside) (PMGP). Additional related compounds such as 1-O-methyl-15-HT, (8Z)-1-O-methyl-15-HT, and O-methyltenellin A are also produced but the enzymes involved in their biosynthesis have still to be determined. This Beauveria bassiana (White muscardine disease fungus) protein is Trans-enoyl reductase tenC.